A 279-amino-acid chain; its full sequence is Diaminopimelate epimerase (279 aa).

Residues asparagine 11 and asparagine 72 each contribute to the substrate site. Cysteine 81 (proton donor) is an active-site residue. Residues 82 to 83, asparagine 187, and 205 to 206 each bind substrate; these read GN and ER. Cysteine 215 acts as the Proton acceptor in catalysis. A substrate-binding site is contributed by 216–217; sequence GT.

This sequence belongs to the diaminopimelate epimerase family. Homodimer.

It is found in the cytoplasm. It carries out the reaction (2S,6S)-2,6-diaminopimelate = meso-2,6-diaminopimelate. Its pathway is amino-acid biosynthesis; L-lysine biosynthesis via DAP pathway; DL-2,6-diaminopimelate from LL-2,6-diaminopimelate: step 1/1. Catalyzes the stereoinversion of LL-2,6-diaminopimelate (L,L-DAP) to meso-diaminopimelate (meso-DAP), a precursor of L-lysine and an essential component of the bacterial peptidoglycan. The polypeptide is Diaminopimelate epimerase (Aquifex aeolicus (strain VF5)).